Here is a 136-residue protein sequence, read N- to C-terminus: ATP synthase epsilon chain (136 aa).

The protein belongs to the ATPase epsilon chain family. In terms of assembly, F-type ATPases have 2 components, CF(1) - the catalytic core - and CF(0) - the membrane proton channel. CF(1) has five subunits: alpha(3), beta(3), gamma(1), delta(1), epsilon(1). CF(0) has three main subunits: a, b and c.

It is found in the cell membrane. Produces ATP from ADP in the presence of a proton gradient across the membrane. In Herpetosiphon aurantiacus (strain ATCC 23779 / DSM 785 / 114-95), this protein is ATP synthase epsilon chain.